Here is an 87-residue protein sequence, read N- to C-terminus: Retinal rod rhodopsin-sensitive cGMP 3',5'-cyclic phosphodiesterase subunit gamma (87 aa).

Methionine 1 bears the N-acetylmethionine mark. A compositionally biased stretch (basic and acidic residues) spans 1 to 12 (MNLEPPKAEIRS). A disordered region spans residues 1 to 55 (MNLEPPKAEIRSATRVIGGPVTPRKGPPKFKQRQTRQFKSKPPKKGVQGFGDDIP). The segment covering 26–44 (GPPKFKQRQTRQFKSKPPK) has biased composition (basic residues).

This sequence belongs to the rod/cone cGMP-PDE gamma subunit family. As to quaternary structure, oligomer composed of two catalytic chains (alpha and beta), an inhibitory chain (gamma) and the delta chain.

The catalysed reaction is 3',5'-cyclic GMP + H2O = GMP + H(+). In terms of biological role, participates in processes of transmission and amplification of the visual signal. cGMP-PDEs are the effector molecules in G-protein-mediated phototransduction in vertebrate rods and cones. The sequence is that of Retinal rod rhodopsin-sensitive cGMP 3',5'-cyclic phosphodiesterase subunit gamma (PDE6G) from Canis lupus familiaris (Dog).